The following is a 595-amino-acid chain: Flap endonuclease 1 (595 aa).

The segment at 1-106 (MGIKGLTKFI…SELEKRGEKR (106 aa)) is N-domain. D34 is a Mg(2+) binding site. DNA-binding residues include R47 and R72. Positions 88, 160, 162, 181, and 183 each coordinate Mg(2+). The tract at residues 124 to 267 (EIKKQSGRTV…KTAYNLIKEY (144 aa)) is I-domain. Position 160 (E160) interacts with DNA. Residues G245 and D247 each coordinate DNA. D247 is a Mg(2+) binding site. The interval 350–358 (TQRRLDNFF) is interaction with PCNA. The disordered stretch occupies residues 370-493 (NEESQIKKEV…TGDVYSFPNG (124 aa)). A compositionally biased stretch (polar residues) spans 392-401 (NDSSTKLNSK). Basic and acidic residues predominate over residues 406–425 (PKGEKESKTEKDDGDTHNGN). The segment covering 426 to 436 (DNEEEGGEGET) has biased composition (acidic residues). The segment covering 461–475 (HKSDSESGNVKKEST) has biased composition (basic and acidic residues).

This sequence belongs to the XPG/RAD2 endonuclease family. FEN1 subfamily. Interacts with PCNA. Three molecules of FEN1 bind to one PCNA trimer with each molecule binding to one PCNA monomer. PCNA stimulates the nuclease activity without altering cleavage specificity. It depends on Mg(2+) as a cofactor. In terms of processing, phosphorylated. Phosphorylation upon DNA damage induces relocalization to the nuclear plasma.

The protein resides in the nucleus. The protein localises to the nucleolus. Its subcellular location is the nucleoplasm. It is found in the mitochondrion. Structure-specific nuclease with 5'-flap endonuclease and 5'-3' exonuclease activities involved in DNA replication and repair. During DNA replication, cleaves the 5'-overhanging flap structure that is generated by displacement synthesis when DNA polymerase encounters the 5'-end of a downstream Okazaki fragment. It enters the flap from the 5'-end and then tracks to cleave the flap base, leaving a nick for ligation. Also involved in the long patch base excision repair (LP-BER) pathway, by cleaving within the apurinic/apyrimidinic (AP) site-terminated flap. Acts as a genome stabilization factor that prevents flaps from equilibrating into structures that lead to duplications and deletions. Also possesses 5'-3' exonuclease activity on nicked or gapped double-stranded DNA, and exhibits RNase H activity. Also involved in replication and repair of rDNA and in repairing mitochondrial DNA. In Plasmodium knowlesi (strain H), this protein is Flap endonuclease 1.